The sequence spans 431 residues: Cytochrome c oxidase subunit 3 (431 aa).

7 helical membrane passes run 70 to 90 (IAPL…FGVI), 96 to 116 (FVIA…SIVF), 132 to 152 (LVMG…SFFW), 176 to 196 (VYSY…SGAI), 321 to 341 (LYFT…EYYF), 356 to 376 (FLLT…IGII), and 408 to 428 (LFYW…IYWW).

Belongs to the cytochrome c oxidase subunit 3 family. Component of the cytochrome c oxidase (complex IV, CIV), a multisubunit enzyme composed of a catalytic core of 3 subunits and several supernumerary subunits. The complex exists as a monomer or a dimer and forms supercomplexes (SCs) in the inner mitochondrial membrane with ubiquinol-cytochrome c oxidoreductase (cytochrome b-c1 complex, complex III, CIII).

It localises to the mitochondrion inner membrane. The enzyme catalyses 4 Fe(II)-[cytochrome c] + O2 + 8 H(+)(in) = 4 Fe(III)-[cytochrome c] + 2 H2O + 4 H(+)(out). Its function is as follows. Component of the cytochrome c oxidase, the last enzyme in the mitochondrial electron transport chain which drives oxidative phosphorylation. The respiratory chain contains 3 multisubunit complexes succinate dehydrogenase (complex II, CII), ubiquinol-cytochrome c oxidoreductase (cytochrome b-c1 complex, complex III, CIII) and cytochrome c oxidase (complex IV, CIV), that cooperate to transfer electrons derived from NADH and succinate to molecular oxygen, creating an electrochemical gradient over the inner membrane that drives transmembrane transport and the ATP synthase. Cytochrome c oxidase is the component of the respiratory chain that catalyzes the reduction of oxygen to water. Electrons originating from reduced cytochrome c in the intermembrane space (IMS) are transferred via the dinuclear copper A center (CU(A)) of subunit 2 and heme A of subunit 1 to the active site in subunit 1, a binuclear center (BNC) formed by heme A3 and copper B (CU(B)). The BNC reduces molecular oxygen to 2 water molecules using 4 electrons from cytochrome c in the IMS and 4 protons from the mitochondrial matrix. The sequence is that of Cytochrome c oxidase subunit 3 (cox3) from Dictyostelium citrinum (Slime mold).